The primary structure comprises 137 residues: Small ribosomal subunit protein uS12 (137 aa).

Positions 1 to 20 are disordered; the sequence is MPTTNQLVNRGRTSKVQKQN. Asp102 is modified (3-methylthioaspartic acid).

Belongs to the universal ribosomal protein uS12 family. In terms of assembly, part of the 30S ribosomal subunit. Contacts proteins S8 and S17. May interact with IF1 in the 30S initiation complex.

Its function is as follows. With S4 and S5 plays an important role in translational accuracy. Functionally, interacts with and stabilizes bases of the 16S rRNA that are involved in tRNA selection in the A site and with the mRNA backbone. Located at the interface of the 30S and 50S subunits, it traverses the body of the 30S subunit contacting proteins on the other side and probably holding the rRNA structure together. The combined cluster of proteins S8, S12 and S17 appears to hold together the shoulder and platform of the 30S subunit. This Mycoplasmopsis synoviae (strain 53) (Mycoplasma synoviae) protein is Small ribosomal subunit protein uS12.